Reading from the N-terminus, the 654-residue chain is Biotin-dependent 3-methylcrotonyl-coenzyme A carboxylase alpha1 subunit (654 aa).

The 448-residue stretch at 1–448 (MFDTVLVANR…DTAVLDERSA (448 aa)) folds into the Biotin carboxylation domain. The ATP-grasp domain maps to 120–319 (KNAVAAFDVP…LVEWQLRVGA (200 aa)). ATP is bound at residue 148-209 (AAEVGYPVLI…ERFVLRPRHI (62 aa)). Mg(2+) contacts are provided by Glu275, Glu290, and Asn292. Residues Glu275, Glu290, and Asn292 each coordinate Mn(2+). Positions 578-653 (HRAVGARPAE…KVEQVLARIK (76 aa)) constitute a Biotinyl-binding domain. Lys620 is subject to N6-biotinyllysine.

The biotin-dependent acyl-CoA carboxylase complex is composed of AccA1, which contains the biotin carboxylase (BC) and biotin carboxyl carrier protein (BCCP) domains, and AccD1, which contains the carboxyl transferase (CT) domain. The AccA1/AccD1 complex forms a dodecamer. The cofactor is Mg(2+). It depends on Mn(2+) as a cofactor. Biotin is required as a cofactor.

The catalysed reaction is N(6)-biotinyl-L-lysyl-[protein] + hydrogencarbonate + ATP = N(6)-carboxybiotinyl-L-lysyl-[protein] + ADP + phosphate + H(+). It functions in the pathway amino-acid degradation; L-leucine degradation. Component of a biotin-dependent acyl-CoA carboxylase complex. This subunit catalyzes the ATP-dependent carboxylation of the biotin carried by the biotin carboxyl carrier (BCC) domain, resulting in the formation of carboxyl biotin. When associated with the beta1 subunit AccD1, is involved in branched amino-acid catabolism with methylcrotonyl coenzyme A as the substrate. The chain is Biotin-dependent 3-methylcrotonyl-coenzyme A carboxylase alpha1 subunit (accA1) from Mycobacterium bovis (strain ATCC BAA-935 / AF2122/97).